The sequence spans 374 residues: Speckle-type POZ protein A (374 aa).

Residues 31–161 enclose the MATH domain; that stretch reads KFSYMWTINN…DDKLTLFCEV (131 aa). The interval 71–191 is required for nuclear localization; that stretch reads VNPKGLDEES…PECRLADELG (121 aa). The region spanning 173–297 is the BTB domain; that stretch reads QNTMNMVKVP…MCEEALCSNL (125 aa). The interval 297–355 is homodimerization; sequence LSVENAAEILILADLHSADQLKTQAVDFINYHASDVMETSGWKSMVVSHPHLVAEAYRS.

This sequence belongs to the Tdpoz family. As to quaternary structure, homodimer. Part of cullin-RING-based BCR (BTB-CUL3-RBX1) E3 ubiquitin-protein ligase complexes that contain CUL3 and SPOP, plus a target protein.

Its subcellular location is the nucleus. The protein resides in the nucleus speckle. The protein operates within protein modification; protein ubiquitination. Its function is as follows. Component of a cullin-RING-based BCR (BTB-CUL3-RBX1) E3 ubiquitin-protein ligase complex that mediates the ubiquitination of target proteins, leading most often to their proteasomal degradation. The protein is Speckle-type POZ protein A (spop-a) of Xenopus laevis (African clawed frog).